A 238-amino-acid polypeptide reads, in one-letter code: Urease accessory protein UreF (238 aa).

This sequence belongs to the UreF family. As to quaternary structure, ureD, UreF and UreG form a complex that acts as a GTP-hydrolysis-dependent molecular chaperone, activating the urease apoprotein by helping to assemble the nickel containing metallocenter of UreC. The UreE protein probably delivers the nickel.

Its subcellular location is the cytoplasm. In terms of biological role, required for maturation of urease via the functional incorporation of the urease nickel metallocenter. The chain is Urease accessory protein UreF from Rhodopseudomonas palustris (strain BisA53).